Here is a 221-residue protein sequence, read N- to C-terminus: Probable chemoreceptor glutamine deamidase CheD 1 (221 aa).

Belongs to the CheD family.

The catalysed reaction is L-glutaminyl-[protein] + H2O = L-glutamyl-[protein] + NH4(+). Probably deamidates glutamine residues to glutamate on methyl-accepting chemotaxis receptors (MCPs), playing an important role in chemotaxis. This chain is Probable chemoreceptor glutamine deamidase CheD 1, found in Methanosarcina mazei (strain ATCC BAA-159 / DSM 3647 / Goe1 / Go1 / JCM 11833 / OCM 88) (Methanosarcina frisia).